We begin with the raw amino-acid sequence, 505 residues long: L-carnitine/gamma-butyrobetaine antiporter (505 aa).

12 helical membrane passes run 10–30 (IEPK…WLTV), 50–70 (IWGW…FWLV), 92–112 (IFMM…SIEI), 143–163 (GPLP…FFFV), 195–215 (FYLV…TPLV), 231–251 (LDAI…ACGL), 263–283 (SYLS…SFIM), 316–336 (WTVF…IFLA), 347–367 (LCFG…TVLG), 403–423 (FSTA…VTLI), 446–466 (LLVR…LLAL), and 475–495 (AIIA…LSFI).

Belongs to the BCCT transporter (TC 2.A.15) family. CaiT subfamily. As to quaternary structure, homotrimer.

The protein localises to the cell inner membrane. It catalyses the reaction 4-(trimethylamino)butanoate(in) + (R)-carnitine(out) = 4-(trimethylamino)butanoate(out) + (R)-carnitine(in). Its pathway is amine and polyamine metabolism; carnitine metabolism. Catalyzes the exchange of L-carnitine for gamma-butyrobetaine. The protein is L-carnitine/gamma-butyrobetaine antiporter of Citrobacter koseri (strain ATCC BAA-895 / CDC 4225-83 / SGSC4696).